A 314-amino-acid chain; its full sequence is Glutathione synthetase (314 aa).

An ATP-grasp domain is found at 125–311 (EKLAAQLFPQ…IAGQLFDAIE (187 aa)). 151–208 (FVQKQEQAILKPLDGMGGHSIFRSSNGDPNLNVILETLTDGGRTLAIAQRYLQQIIEG) is an ATP binding site. 2 residues coordinate Mg(2+): Glu282 and Asn284.

Belongs to the prokaryotic GSH synthase family. Mg(2+) is required as a cofactor. It depends on Mn(2+) as a cofactor.

It carries out the reaction gamma-L-glutamyl-L-cysteine + glycine + ATP = glutathione + ADP + phosphate + H(+). It participates in sulfur metabolism; glutathione biosynthesis; glutathione from L-cysteine and L-glutamate: step 2/2. The chain is Glutathione synthetase from Xylella fastidiosa (strain 9a5c).